The following is a 584-amino-acid chain: MPIRILPSDLSSQISAGEIIERPASVVKEIIENSIDAGSKNINIIVENSGFQSIILKDDGCGIDKKDLLLAVCHHATSKINSLSDLDKLTTFGFRGEALASIRAVSRLTLISCTRFNDVAAKIYLEGFCSKNIILQPIAHPEGTTIIVDNLFYNIPVRLKFLKNKKLEFSKICEVVKKIALSHFYINFSLKHNNKLITQYNSINNRKNKINRLKDIFDTLDTSEFLEIKEKKYRMVLFGWISHPYNFKKIKNIQYCYVNNRYLYNNIFVNAVRAAYSKIEQKKNISFVLYLTIESFNIDINIHPTKNEIKFHNPDVVYTFIYEAVFSYLKKIKEKYYFNFSCKKQTQLNKEKEFYFYDSDPTFLTLISSIFFKKKQIFKNIKNKIKHNNFISKSTPLEKYESSIGRLLIIIHKYYGLIYHDNNFLLLSFPVAKGIVRKQKLKNNIQKENIIEYFLSNIKINLTSQEYLILFNQKEILSKFGFHLIFKKKYVILSSIPAFLKKCNFHIIISNFFAFLFLKKQVFISDIVDWFYINVFIELKNWTYIRGIEVLLEIEYYCPLLLINPPSKLLQKININAALCILKI.

Belongs to the DNA mismatch repair MutL/HexB family.

In terms of biological role, this protein is involved in the repair of mismatches in DNA. It is required for dam-dependent methyl-directed DNA mismatch repair. May act as a 'molecular matchmaker', a protein that promotes the formation of a stable complex between two or more DNA-binding proteins in an ATP-dependent manner without itself being part of a final effector complex. This is DNA mismatch repair protein MutL from Buchnera aphidicola subsp. Acyrthosiphon pisum (strain Tuc7).